The primary structure comprises 462 residues: Glutamate--tRNA ligase 1 (462 aa).

The short motif at proline 8–glycine 18 is the 'HIGH' region element. Residues lysine 237–arginine 241 carry the 'KMSKS' region motif. Lysine 240 serves as a coordination point for ATP.

Belongs to the class-I aminoacyl-tRNA synthetase family. Glutamate--tRNA ligase type 1 subfamily. In terms of assembly, monomer.

Its subcellular location is the cytoplasm. The enzyme catalyses tRNA(Glu) + L-glutamate + ATP = L-glutamyl-tRNA(Glu) + AMP + diphosphate. Its function is as follows. Catalyzes the attachment of glutamate to tRNA(Glu) in a two-step reaction: glutamate is first activated by ATP to form Glu-AMP and then transferred to the acceptor end of tRNA(Glu). The chain is Glutamate--tRNA ligase 1 from Sulfurimonas denitrificans (strain ATCC 33889 / DSM 1251) (Thiomicrospira denitrificans (strain ATCC 33889 / DSM 1251)).